A 308-amino-acid polypeptide reads, in one-letter code: Olfactory receptor 4N5 (308 aa).

Topologically, residues 1–25 (METQNLTVVTEFILLGLTQSQDAQL) are extracellular. Asn5 is a glycosylation site (N-linked (GlcNAc...) asparagine). A helical membrane pass occupies residues 26–49 (LVFVLVLIFYLIILPGNFLIIFTI). Residues 50 to 57 (KSDPGLTA) lie on the Cytoplasmic side of the membrane. A helical membrane pass occupies residues 58-79 (PLYFFLGNLALLDASYSFIVVP). Residues 80–100 (RMLVDFLSEKKVISYRSCITQ) lie on the Extracellular side of the membrane. Residues Cys97 and Cys189 are joined by a disulfide bond. Residues 101–120 (LFFLHFLGAGEMFLLVVMAF) form a helical membrane-spanning segment. The Cytoplasmic portion of the chain corresponds to 121–139 (DRYIAICRPLHYSTIMNPR). A helical membrane pass occupies residues 140–158 (ACYALSLVLWLGGFIHSIV). Over 159-195 (QVALILHLPFCGPNQLDNFFCDVPQVIKLACTNTFVV) the chain is Extracellular. The chain crosses the membrane as a helical span at residues 196-219 (ELLMVSNSGLLSLLCFLGLLASYA). The Cytoplasmic segment spans residues 220-235 (VILCRIREHSSEGKSK). Residues 236-258 (AISTCTTHIIIIFLMFGPAIFIY) form a helical membrane-spanning segment. The Extracellular segment spans residues 259–269 (TCPFQAFPADK). The chain crosses the membrane as a helical span at residues 270 to 289 (VVSLFHTVIFPLMNPVIYTL). The Cytoplasmic segment spans residues 290 to 308 (RNQEVKASMRKLLSQHMFC).

This sequence belongs to the G-protein coupled receptor 1 family.

It localises to the cell membrane. Its function is as follows. Odorant receptor. The polypeptide is Olfactory receptor 4N5 (OR4N5) (Homo sapiens (Human)).